We begin with the raw amino-acid sequence, 408 residues long: Argininosuccinate synthase (408 aa).

Residues 16-24 (AYSGGLDTS) and A44 contribute to the ATP site. L-citrulline contacts are provided by Y96 and S101. Position 126 (G126) interacts with ATP. L-aspartate contacts are provided by T128, N132, and D133. N132 contacts L-citrulline. L-citrulline is bound by residues R136, S185, S194, E270, and Y282.

This sequence belongs to the argininosuccinate synthase family. Type 1 subfamily. In terms of assembly, homotetramer.

The protein localises to the cytoplasm. The catalysed reaction is L-citrulline + L-aspartate + ATP = 2-(N(omega)-L-arginino)succinate + AMP + diphosphate + H(+). Its pathway is amino-acid biosynthesis; L-arginine biosynthesis; L-arginine from L-ornithine and carbamoyl phosphate: step 2/3. This chain is Argininosuccinate synthase, found in Shewanella woodyi (strain ATCC 51908 / MS32).